A 235-amino-acid chain; its full sequence is tRNA (guanine-N(1)-)-methyltransferase (235 aa).

Residues glycine 114 and 134-139 (IGDYIL) each bind S-adenosyl-L-methionine.

The protein belongs to the RNA methyltransferase TrmD family. In terms of assembly, homodimer.

It is found in the cytoplasm. The catalysed reaction is guanosine(37) in tRNA + S-adenosyl-L-methionine = N(1)-methylguanosine(37) in tRNA + S-adenosyl-L-homocysteine + H(+). Functionally, specifically methylates guanosine-37 in various tRNAs. This is tRNA (guanine-N(1)-)-methyltransferase from Ehrlichia ruminantium (strain Gardel).